A 104-amino-acid polypeptide reads, in one-letter code: uncharacterized protein (104 aa).

Disordered stretches follow at residues 1–20 (MTETSTAKVATTKKSTTTRK) and 83–104 (TASASSSGKKVVASKKKVVAKK). Residues 83-93 (TASASSSGKKV) show a composition bias toward low complexity. The span at 94–104 (VASKKKVVAKK) shows a compositional bias: basic residues.

This is an uncharacterized protein from Dictyostelium discoideum (Social amoeba).